A 322-amino-acid polypeptide reads, in one-letter code: (12E)-labda-8(17),12,14-triene synthase (322 aa).

Residues 1–11 (MNDATRTSTTP) show a composition bias toward polar residues. Positions 1-26 (MNDATRTSTTPPALPMPDLRDSFPGP) are disordered. Mg(2+)-binding residues include D93 and E98. The DDXXXE motif motif lies at 93-98 (DDAHGE). R188 contributes to the substrate binding site. N234 and S238 together coordinate Mg(2+). Positions 234 to 242 (NDLASYAKE) match the NXXXSXXXE motif motif. K241 provides a ligand contact to substrate. E242 contributes to the Mg(2+) binding site. 319-320 (RY) contacts substrate.

It belongs to the terpene synthase family. Mg(2+) serves as cofactor.

It catalyses the reaction (+)-copalyl diphosphate = (12E)-labda-8(17),12,14-triene + diphosphate. Functionally, involved in the biosynthesis of the labdane-type bicyclic diterpene labda-8(17),12(E),14-triene. Catalyzes the conversion of (+)-copalyl diphosphate to yield labda-8(17),12(E),14-triene. This is (12E)-labda-8(17),12,14-triene synthase from Streptomyces anulatus (Streptomyces chrysomallus).